Here is a 361-residue protein sequence, read N- to C-terminus: Ankyrin repeat domain-containing protein 16 (361 aa).

ANK repeat units follow at residues 36–66 (AGDT…DIEA), 70–99 (DYKR…VVDS), 103–132 (ADWT…NPLL), 136–165 (DGWN…DAWK), 170–200 (IRRT…EPDC), 204–233 (CGVT…ACSS), 238–268 (MGAQ…DVDV), 273–302 (SQLT…DINS), and 306–335 (RNRS…KDSE).

As to quaternary structure, interacts with AARS; the interaction is direct. As to expression, widely expressed in brain (at protein level).

The protein resides in the cytoplasm. The protein localises to the nucleus. Its function is as follows. Required to prevent the misactivation of serine (Ser) with tRNA(Ala) by promoting the hydrolysis of Ser-mischarged tRNA(Ala), thereby playing a role in translational fidelity. Binds directly to the catalytic domain of AARS/AlaRS and captures Ser that is misactivated by AARS/AlaRS, preventing the charging of Ser adenylates to tRNA(Ala) and precluding Ser misincorporation in nascent peptides. In Mus musculus (Mouse), this protein is Ankyrin repeat domain-containing protein 16.